The chain runs to 285 residues: NAD kinase (285 aa).

Asp-66 serves as the catalytic Proton acceptor. NAD(+) contacts are provided by residues 66–67 (DG), 137–138 (ND), Arg-148, Arg-165, Asp-167, and 178–183 (TAYSMS).

The protein belongs to the NAD kinase family. A divalent metal cation is required as a cofactor.

The protein localises to the cytoplasm. The enzyme catalyses NAD(+) + ATP = ADP + NADP(+) + H(+). Involved in the regulation of the intracellular balance of NAD and NADP, and is a key enzyme in the biosynthesis of NADP. Catalyzes specifically the phosphorylation on 2'-hydroxyl of the adenosine moiety of NAD to yield NADP. The protein is NAD kinase of Chlorobium phaeobacteroides (strain DSM 266 / SMG 266 / 2430).